Here is a 396-residue protein sequence, read N- to C-terminus: S-adenosylmethionine synthase (396 aa).

Histidine 15 lines the ATP pocket. Aspartate 17 provides a ligand contact to Mg(2+). Glutamate 43 is a binding site for K(+). The L-methionine site is built by glutamate 56 and glutamine 99. The tract at residues 99 to 109 (QSSDIAMGVDK) is flexible loop. ATP is bound by residues 175 to 177 (DGK), 241 to 242 (RF), aspartate 250, 256 to 257 (RK), alanine 273, and lysine 277. Aspartate 250 is a binding site for L-methionine. Lysine 281 is an L-methionine binding site.

It belongs to the AdoMet synthase family. Homotetramer; dimer of dimers. Mg(2+) serves as cofactor. Requires K(+) as cofactor.

Its subcellular location is the cytoplasm. It catalyses the reaction L-methionine + ATP + H2O = S-adenosyl-L-methionine + phosphate + diphosphate. Its pathway is amino-acid biosynthesis; S-adenosyl-L-methionine biosynthesis; S-adenosyl-L-methionine from L-methionine: step 1/1. Catalyzes the formation of S-adenosylmethionine (AdoMet) from methionine and ATP. The overall synthetic reaction is composed of two sequential steps, AdoMet formation and the subsequent tripolyphosphate hydrolysis which occurs prior to release of AdoMet from the enzyme. This is S-adenosylmethionine synthase from Ruminiclostridium cellulolyticum (strain ATCC 35319 / DSM 5812 / JCM 6584 / H10) (Clostridium cellulolyticum).